We begin with the raw amino-acid sequence, 611 residues long: Fatty acid photodecarboxylase, chloroplastic (611 aa).

The interval 1–22 is disordered; sequence MMLGPKTVTRGATKGAAPRSMA. A chloroplast-targeting transit peptide spans 1 to 36; that stretch reads MMLGPKTVTRGATKGAAPRSMAARRVGGARRLSVRA. FAD-binding positions include 55–56, E76, M125, S129, and 133–136; these read TA and NATL. Hexadecanoate-binding residues include C392, R412, Y427, and Q447. FAD is bound at residue G582.

Belongs to the GMC oxidoreductase family. FAD is required as a cofactor.

It localises to the plastid. It is found in the chloroplast. It catalyses the reaction a long-chain fatty acid + hnu + H(+) = a long-chain alkane + CO2. It carries out the reaction hnu + hexadecanoate + H(+) = pentadecane + CO2. Activated by blue light and repressed by red light. Catalyzes the decarboxylation of free fatty acids to n-alkanes or n-alkenes in response to blue light. Substrate preference is toward fatty acids with C17 or C18 chains. Saturated fatty acids are converted to alkanes, not alkenes. The decarboxylation is initiated through electron abstraction from the fatty acid by the photo-excited FAD. This is Fatty acid photodecarboxylase, chloroplastic from Chlamydomonas reinhardtii (Chlamydomonas smithii).